Here is a 121-residue protein sequence, read N- to C-terminus: Small ribosomal subunit protein bS21m (121 aa).

The N-terminal 14 residues, 1 to 14, are a transit peptide targeting the mitochondrion; the sequence is MNSSYFPGVLGVRW.

This sequence belongs to the bacterial ribosomal protein bS21 family. As to quaternary structure, component of the mitochondrial small ribosomal subunit (mt-SSU). Mature yeast 74S mitochondrial ribosomes consist of a small (37S) and a large (54S) subunit. The 37S small subunit contains a 15S ribosomal RNA (15S mt-rRNA) and at least 32 different proteins. The 54S large subunit contains a 21S rRNA (21S mt-rRNA) and at least 45 different proteins.

It localises to the mitochondrion. Its function is as follows. Component of the mitochondrial ribosome (mitoribosome), a dedicated translation machinery responsible for the synthesis of mitochondrial genome-encoded proteins, including at least some of the essential transmembrane subunits of the mitochondrial respiratory chain. The mitoribosomes are attached to the mitochondrial inner membrane and translation products are cotranslationally integrated into the membrane. The polypeptide is Small ribosomal subunit protein bS21m (mrp21) (Schizosaccharomyces pombe (strain 972 / ATCC 24843) (Fission yeast)).